The following is a 482-amino-acid chain: Sugar transporter ERD6-like 16 (482 aa).

The next 12 helical transmembrane spans lie at 42 to 62 (LMVL…GSCV), 80 to 100 (LAEF…GAVM), 117 to 137 (SACF…ALLL), 142 to 162 (FFTG…IAEI), 173 to 193 (TLNQ…GSLI), 197 to 217 (TLAL…CFIP), 280 to 300 (VIIG…GIGF), 316 to 336 (LGTI…TILI), 344 to 364 (LIMI…TSFL), 382 to 402 (GVLI…WVIM), 413 to 433 (IAGS…SYTF), and 443 to 463 (GTFY…AKMV).

It belongs to the major facilitator superfamily. Sugar transporter (TC 2.A.1.1) family.

Its subcellular location is the membrane. Functionally, sugar transporter. This chain is Sugar transporter ERD6-like 16, found in Arabidopsis thaliana (Mouse-ear cress).